The chain runs to 343 residues: Methionine import ATP-binding protein MetN 1 (343 aa).

Residues 2 to 241 (IKLSNITKVF…PKTPLAQKFI (240 aa)) enclose the ABC transporter domain. 38 to 45 (GASGAGKS) is a binding site for ATP.

This sequence belongs to the ABC transporter superfamily. Methionine importer (TC 3.A.1.24) family. The complex is composed of two ATP-binding proteins (MetN), two transmembrane proteins (MetI) and a solute-binding protein (MetQ).

The protein resides in the cell inner membrane. The catalysed reaction is L-methionine(out) + ATP + H2O = L-methionine(in) + ADP + phosphate + H(+). It carries out the reaction D-methionine(out) + ATP + H2O = D-methionine(in) + ADP + phosphate + H(+). Functionally, part of the ABC transporter complex MetNIQ involved in methionine import. Responsible for energy coupling to the transport system. The polypeptide is Methionine import ATP-binding protein MetN 1 (Salmonella typhimurium (strain LT2 / SGSC1412 / ATCC 700720)).